Reading from the N-terminus, the 186-residue chain is Chromophore lyase CpcS/CpeS 1 (186 aa).

It belongs to the CpcS/CpeS biliprotein lyase family.

Functionally, covalently attaches a chromophore to Cys residue(s) of phycobiliproteins. This Synechocystis sp. (strain ATCC 27184 / PCC 6803 / Kazusa) protein is Chromophore lyase CpcS/CpeS 1.